The sequence spans 396 residues: E3 ubiquitin-protein transferase MAEA (396 aa).

The tract at residues 1–124 (MAVQESAAQL…AAASMWKRKR (124 aa)) is extracellular and involved in cell to cell contact. Thr28 carries the phosphothreonine modification. Residues 121–153 (KRKRMDRMMVEHLLRCGYYNTAVKLARQSGIED) form the LisH domain. Positions 159-216 (MFLTAKEVEESLERRETATCLAWCHDNKSRLRKMKSCLEFSLRIQEFIELVRQNKRLD) constitute a CTLH domain. An RING-Gid-type zinc finger spans residues 314–381 (CPVCSRSLNK…QDDKVVCPRT (68 aa)).

In terms of assembly, identified in the CTLH complex that contains GID4, RANBP9 and/or RANBP10, MKLN1, MAEA, RMND5A (or alternatively its paralog RMND5B), GID8, ARMC8, WDR26 and YPEL5. Within this complex, MAEA, RMND5A (or alternatively its paralog RMND5B), GID8, WDR26, and RANBP9 and/or RANBP10 form the catalytic core, while GID4, MKLN1, ARMC8 and YPEL5 have ancillary roles. Interacts with F-actin. In terms of processing, autoubiquitinated as component of the CTLH E3 ubiquitin-protein ligase complex (in vitro). Detected in embryonic fibroblasts. Detected in macrophages. Detected in heart. liver, spleen and kidney (at protein level).

The protein resides in the cytoplasm. The protein localises to the nucleus. It localises to the nucleoplasm. It is found in the nucleus matrix. Its subcellular location is the cell membrane. The protein resides in the cytoskeleton. The enzyme catalyses S-ubiquitinyl-[E2 ubiquitin-conjugating enzyme]-L-cysteine + [acceptor protein]-L-lysine = [E2 ubiquitin-conjugating enzyme]-L-cysteine + N(6)-ubiquitinyl-[acceptor protein]-L-lysine.. Core component of the CTLH E3 ubiquitin-protein ligase complex that selectively accepts ubiquitin from UBE2H and mediates ubiquitination and subsequent proteasomal degradation of the transcription factor HBP1. MAEA and RMND5A are both required for catalytic activity of the CTLH E3 ubiquitin-protein ligase complex. MAEA is required for normal cell proliferation. The CTLH E3 ubiquitin-protein ligase complex is not required for the degradation of enzymes involved in gluconeogenesis, such as FBP1. Plays a role in erythroblast enucleation during erythrocyte maturation and in the development of mature macrophages. Mediates the attachment of erythroid cell to mature macrophages; this MAEA-mediated contact inhibits erythroid cell apoptosis. Participates in erythroblastic island formation, which is the functional unit of definitive erythropoiesis. Associates with F-actin to regulate actin distribution in erythroblasts and macrophages. May contribute to nuclear architecture and cells division events. This chain is E3 ubiquitin-protein transferase MAEA (Maea), found in Mus musculus (Mouse).